The following is a 287-amino-acid chain: Histone H1 (287 aa).

The span at 1–11 shows a compositional bias: low complexity; the sequence is MATEEPVIVNE. 2 disordered regions span residues 1-58 and 120-287; these read MATE…THPP and YKLP…RGRK. Residues 33–51 are compositionally biased toward basic residues; the sequence is GKAKKETKAKKPAAPRKRS. The H15 domain occupies 55 to 124; sequence THPPYFEMIK…KVKNSYKLPS (70 aa). The span at 135–202 shows a compositional bias: basic residues; the sequence is AKKKPAAAKS…KAKPVAKAKP (68 aa). The segment covering 203-248 has biased composition (low complexity); it reads KAAAAAKPKAAVKPKAAPAKTKAAVKPNLKAKTTTAKVAKTATRTT. The segment covering 276-287 has biased composition (basic residues); that stretch reads PAKKATPKRGRK.

It belongs to the histone H1/H5 family.

The protein resides in the nucleus. The protein localises to the chromosome. Histones H1 are necessary for the condensation of nucleosome chains into higher-order structures. This chain is Histone H1, found in Solanum lycopersicum (Tomato).